A 585-amino-acid chain; its full sequence is Glutamate decarboxylase 2 (585 aa).

Residues 1–25 (MASPGSGFWSFGSEDGSGDPENPGT) form a disordered region. Residues S3, S6, S10, S13, and S17 each carry the phosphoserine modification. 2 S-palmitoyl cysteine lipidation sites follow: C30 and C45. 181–183 (QLS) lines the substrate pocket. The residue at position 396 (K396) is an N6-(pyridoxal phosphate)lysine. R558 is a binding site for substrate.

This sequence belongs to the group II decarboxylase family. As to quaternary structure, homodimer. The cofactor is pyridoxal 5'-phosphate. Post-translationally, the N-terminus is blocked. In terms of processing, phosphorylated; which does not affect kinetic parameters or subcellular location. Palmitoylated; which is required for presynaptic clustering.

Its subcellular location is the cytoplasm. It localises to the cytosol. It is found in the cytoplasmic vesicle. The protein localises to the presynaptic cell membrane. The protein resides in the golgi apparatus membrane. The catalysed reaction is L-glutamate + H(+) = 4-aminobutanoate + CO2. In terms of biological role, catalyzes the production of GABA. The chain is Glutamate decarboxylase 2 (Gad2) from Rattus norvegicus (Rat).